The following is a 251-amino-acid chain: Hydroxyacylglutathione hydrolase (251 aa).

His-58, His-60, Asp-62, His-63, His-116, Asp-135, and His-173 together coordinate Zn(2+).

The protein belongs to the metallo-beta-lactamase superfamily. Glyoxalase II family. In terms of assembly, monomer. Requires Zn(2+) as cofactor.

It catalyses the reaction an S-(2-hydroxyacyl)glutathione + H2O = a 2-hydroxy carboxylate + glutathione + H(+). The protein operates within secondary metabolite metabolism; methylglyoxal degradation; (R)-lactate from methylglyoxal: step 2/2. Thiolesterase that catalyzes the hydrolysis of S-D-lactoyl-glutathione to form glutathione and D-lactic acid. The polypeptide is Hydroxyacylglutathione hydrolase (Bdellovibrio bacteriovorus (strain ATCC 15356 / DSM 50701 / NCIMB 9529 / HD100)).